A 29-amino-acid polypeptide reads, in one-letter code: uncharacterized protein (29 aa).

Positions 1–29 (MFKMKFGDTLPRSDFGTGGNKQAPGLELG) are disordered.

This is an uncharacterized protein from Saccharomyces cerevisiae (strain ATCC 204508 / S288c) (Baker's yeast).